The chain runs to 124 residues: Mitochondrial zinc maintenance protein 1, mitochondrial (124 aa).

This sequence belongs to the complex I LYR family. MZM1 subfamily. Interacts with RIP1.

Its subcellular location is the mitochondrion matrix. Functionally, assembly factor required for Rieske Fe-S protein RIP1 incorporation into the cytochrome b-c1 (CIII) complex. Functions as a chaperone, binding to this subunit within the mitochondrial matrix and stabilizing it prior to its translocation and insertion into the late CIII dimeric intermediate within the mitochondrial inner membrane. Modulates the mitochondrial matrix zinc pool. The chain is Mitochondrial zinc maintenance protein 1, mitochondrial (MZM1) from Paracoccidioides lutzii (strain ATCC MYA-826 / Pb01) (Paracoccidioides brasiliensis).